Reading from the N-terminus, the 341-residue chain is MKTSKILNTAAICLLAMGFNGNNVSCTNLNGSQEPAAANPVVSTPGNDAQQAGTQQGGANSKSVPEQQPQQAAGETTATVVVKTLDVLRGELRGQREAFLSEIIKSDGPFTILQLVGYLRVVDTDLLLKVDSTKVDEAGKKVKAYLEKIGIRGDSVEAALDNLMIKVYEITKGTVESSAQGTDSEELKTLLLKFSEDLKAEQELHSEAKGGEALLSSMKTQHDELLKKFAALTPTFLTSEDISGYLTVPEYGAPMNAAKWKKVEGMIHGKLESSEVPANLKALVAELIELREQMMDLLYGPIGHHDCAAGSGQGSSPKKPSFAAVPSSLSAIVFGIIVSMF.

The signal sequence occupies residues M1 to G21. Residues N23 and N30 are each glycosylated (N-linked (GlcNAc...) asparagine). C26 and C307 form a disulfide bridge. A disordered region spans residues A36–E75. The span at A49 to A59 shows a compositional bias: low complexity. Over residues N60–E75 the composition is skewed to polar residues. Residue S311 is the site of GPI-anchor amidated serine attachment. Positions G312–F341 are cleaved as a propeptide — removed in mature form.

The signal sequence is cleaved. In terms of processing, glycosylated. Post-translationally, palmitoylated. Not myristoylated.

It localises to the cell membrane. The protein resides in the secreted. It is found in the vesicle. Its function is as follows. Binds to host erythrocytes. In Babesia divergens, this protein is Adhesion protein Bd37.